Reading from the N-terminus, the 431-residue chain is Histidine--tRNA ligase (431 aa).

The interval 1-20 (MALQRPKGTQDHLPDGSPKL) is disordered.

This sequence belongs to the class-II aminoacyl-tRNA synthetase family. In terms of assembly, homodimer.

The protein localises to the cytoplasm. It carries out the reaction tRNA(His) + L-histidine + ATP = L-histidyl-tRNA(His) + AMP + diphosphate + H(+). The polypeptide is Histidine--tRNA ligase (Deinococcus geothermalis (strain DSM 11300 / CIP 105573 / AG-3a)).